The chain runs to 315 residues: Adenine deaminase (315 aa).

Zn(2+) is bound by residues H14, H16, and H194. E197 acts as the Proton donor in catalysis. D275 provides a ligand contact to Zn(2+). D276 contributes to the substrate binding site.

It belongs to the metallo-dependent hydrolases superfamily. Adenosine and AMP deaminases family. Adenine deaminase type 2 subfamily. The cofactor is Zn(2+).

It carries out the reaction adenine + H2O + H(+) = hypoxanthine + NH4(+). Its function is as follows. Catalyzes the hydrolytic deamination of adenine to hypoxanthine. Plays an important role in the purine salvage pathway and in nitrogen catabolism. The chain is Adenine deaminase from Ectopseudomonas mendocina (strain ymp) (Pseudomonas mendocina).